The primary structure comprises 513 residues: Dye-decolorizing peroxidase msp1 (513 aa).

An N-terminal signal peptide occupies residues 1 to 20 (MKLFSASVFAAIIASHYASA). A propeptide spanning residues 21 to 55 (TAHIRAPNVKPRRTNSLLTAPPQQPPLPSAQQAAS) is cleaved from the precursor. A disordered region spans residues 33–52 (RTNSLLTAPPQQPPLPSAQQ). D228 serves as the catalytic Proton acceptor. H365 contributes to the heme binding site.

As to quaternary structure, homodimer. Requires heme b as cofactor.

It is found in the secreted. The enzyme catalyses Reactive Blue 5 + 2 H2O2 = 2,2'-disulfonyl azobenzene + 3-[(4-amino-6-chloro-1,3,5-triazin-2-yl)amino]benzenesulfonate + phthalate + 2 H2O + 2 H(+). It carries out the reaction 2 a phenolic donor + H2O2 = 2 a phenolic radical donor + 2 H2O. In terms of biological role, manganese-independent peroxidase that is able to convert a large number of compounds, but its physiological substrate is not known. In addition to classic peroxidase substrates (e.g. 2,6-dimethoxyphenol), oxidizes dyes such as Reactive Blue 5. Also degrades beta-carotene. This is Dye-decolorizing peroxidase msp1 from Mycetinis scorodonius (Garlic mushroom).